The primary structure comprises 473 residues: Lipid A galacturonosyltransferase RgtD (473 aa).

Transmembrane regions (helical) follow at residues 6–26 (GLLI…FDAT), 68–88 (AIYW…LVLM), 94–114 (FVGP…PGVA), 118–138 (VFFS…LAYF), 160–180 (FLTK…LLLI), 190–210 (VIIA…WNLQ), 238–258 (FFAA…LWAV), 271–291 (KMLV…ATVA), 295–315 (ANWA…LLYL), and 327–347 (INGI…QLLL).

The protein resides in the cell membrane. It functions in the pathway bacterial outer membrane biogenesis; LPS lipid A biosynthesis. Involved in the modification of the lipopolysaccharide (LPS) lipid A moiety. Catalyzes the transfer of a galacturonic acid (GalA) residue to the 4'-position of 4'-dephosphorylated lipid A, using dodecaprenyl phosphate-GalA as the donor substrate. Acts before the other GalA transferases RgtA, RgtB and RgtC. In Rhizobium johnstonii (strain DSM 114642 / LMG 32736 / 3841) (Rhizobium leguminosarum bv. viciae), this protein is Lipid A galacturonosyltransferase RgtD.